The sequence spans 426 residues: Gamma-glutamyl phosphate reductase (426 aa).

The protein belongs to the gamma-glutamyl phosphate reductase family.

It localises to the cytoplasm. It catalyses the reaction L-glutamate 5-semialdehyde + phosphate + NADP(+) = L-glutamyl 5-phosphate + NADPH + H(+). The protein operates within amino-acid biosynthesis; L-proline biosynthesis; L-glutamate 5-semialdehyde from L-glutamate: step 2/2. In terms of biological role, catalyzes the NADPH-dependent reduction of L-glutamate 5-phosphate into L-glutamate 5-semialdehyde and phosphate. The product spontaneously undergoes cyclization to form 1-pyrroline-5-carboxylate. This Cupriavidus necator (strain ATCC 17699 / DSM 428 / KCTC 22496 / NCIMB 10442 / H16 / Stanier 337) (Ralstonia eutropha) protein is Gamma-glutamyl phosphate reductase.